Reading from the N-terminus, the 1044-residue chain is Ras GTPase-activating protein 1 (1044 aa).

Methionine 1 carries the N-acetylmethionine modification. The segment at methionine 1–glutamate 160 is hydrophobic. The SH2 1 domain maps to tryptophan 178–valine 269. An SH3 domain is found at glutamate 276 to arginine 338. The 91-residue stretch at tryptophan 348–valine 438 folds into the SH2 2 domain. Residues asparagine 471–asparagine 574 form the PH domain. In terms of domain architecture, C2 spans asparagine 574 to phenylalanine 687. Tyrosine 612 is modified (phosphotyrosine). 2 consecutive repeats follow at residues proline 646–aspartate 664 and proline 665–threonine 683. The 211-residue stretch at lysine 761–leucine 971 folds into the Ras-GAP domain. A Phosphoserine modification is found at serine 828.

In terms of assembly, interacts with SQSTM1. Interacts with SPSB1; the interaction does not promote degradation. Interacts with CAV2 (tyrosine phosphorylated form). Directly interacts with NCK1. Interacts with PDGFRB (tyrosine phosphorylated). Interacts (via SH2 domain) with the 'Tyr-9' phosphorylated form of PDPK1. Interacts with tyrosine-phosphorylated EPHB4. Post-translationally, phosphorylated by SRC and LCK. The phosphorylation SRC inhibits its ability to stimulate the Ras-GTPase activity, whereas phosphorylation by LCK does not display any effect on stimulation activity.

It is found in the cytoplasm. Its function is as follows. Inhibitory regulator of the Ras-cyclic AMP pathway. Stimulates the GTPase of normal but not oncogenic Ras p21. In Bos taurus (Bovine), this protein is Ras GTPase-activating protein 1 (RASA1).